Consider the following 1048-residue polypeptide: Nonsense-mediated mRNA decay protein 5 (1048 aa).

The Importin N-terminal domain occupies 24–104 (AETHLKNASK…KDMLIKTMVS (81 aa)). Ser-977 bears the Phosphoserine mark.

GTP-bound Ran dissociates the isolated NMD5/TFIIS complex.

It localises to the nucleus. The protein localises to the cytoplasm. Its function is as follows. Active in protein import into the nucleus. Its major import substrate is transcription elongation factor TFIIS. This Saccharomyces cerevisiae (strain ATCC 204508 / S288c) (Baker's yeast) protein is Nonsense-mediated mRNA decay protein 5 (NMD5).